Reading from the N-terminus, the 252-residue chain is Trans-aconitate 2-methyltransferase (252 aa).

It belongs to the methyltransferase superfamily. Tam family.

Its subcellular location is the cytoplasm. It catalyses the reaction trans-aconitate + S-adenosyl-L-methionine = (E)-3-(methoxycarbonyl)pent-2-enedioate + S-adenosyl-L-homocysteine. Its function is as follows. Catalyzes the S-adenosylmethionine monomethyl esterification of trans-aconitate. This chain is Trans-aconitate 2-methyltransferase, found in Enterobacter sp. (strain 638).